A 345-amino-acid chain; its full sequence is Phosphoribosylformylglycinamidine cyclo-ligase (345 aa).

It belongs to the AIR synthase family.

Its subcellular location is the cytoplasm. It carries out the reaction 2-formamido-N(1)-(5-O-phospho-beta-D-ribosyl)acetamidine + ATP = 5-amino-1-(5-phospho-beta-D-ribosyl)imidazole + ADP + phosphate + H(+). It participates in purine metabolism; IMP biosynthesis via de novo pathway; 5-amino-1-(5-phospho-D-ribosyl)imidazole from N(2)-formyl-N(1)-(5-phospho-D-ribosyl)glycinamide: step 2/2. The sequence is that of Phosphoribosylformylglycinamidine cyclo-ligase from Escherichia coli O139:H28 (strain E24377A / ETEC).